The following is a 51-amino-acid chain: Large ribosomal subunit protein eL39y (51 aa).

Residues 1–21 (MPSHKSFMIKKKLGKKMRQNR) form a disordered region. Positions 7 to 19 (FMIKKKLGKKMRQ) are enriched in basic residues.

This sequence belongs to the eukaryotic ribosomal protein eL39 family.

This chain is Large ribosomal subunit protein eL39y (RPL39B), found in Arabidopsis thaliana (Mouse-ear cress).